A 165-amino-acid polypeptide reads, in one-letter code: SsrA-binding protein (165 aa).

This sequence belongs to the SmpB family.

Its subcellular location is the cytoplasm. In terms of biological role, required for rescue of stalled ribosomes mediated by trans-translation. Binds to transfer-messenger RNA (tmRNA), required for stable association of tmRNA with ribosomes. tmRNA and SmpB together mimic tRNA shape, replacing the anticodon stem-loop with SmpB. tmRNA is encoded by the ssrA gene; the 2 termini fold to resemble tRNA(Ala) and it encodes a 'tag peptide', a short internal open reading frame. During trans-translation Ala-aminoacylated tmRNA acts like a tRNA, entering the A-site of stalled ribosomes, displacing the stalled mRNA. The ribosome then switches to translate the ORF on the tmRNA; the nascent peptide is terminated with the 'tag peptide' encoded by the tmRNA and targeted for degradation. The ribosome is freed to recommence translation, which seems to be the essential function of trans-translation. This is SsrA-binding protein from Ruthia magnifica subsp. Calyptogena magnifica.